The sequence spans 198 residues: Probable GTP-binding protein EngB (198 aa).

Residues 36 to 198 enclose the EngB-type G domain; that stretch reads SEPQFAFIGR…NLSKLQELLE (163 aa). Residues 44-51, 70-74, 88-91, 155-158, and 182-184 contribute to the GTP site; these read GRSNVGKS, GRTQL, DLPG, NKID, and ISA. Residues serine 51 and threonine 72 each contribute to the Mg(2+) site.

The protein belongs to the TRAFAC class TrmE-Era-EngA-EngB-Septin-like GTPase superfamily. EngB GTPase family. It depends on Mg(2+) as a cofactor.

Necessary for normal cell division and for the maintenance of normal septation. The sequence is that of Probable GTP-binding protein EngB from Mesomycoplasma hyopneumoniae (strain 232) (Mycoplasma hyopneumoniae).